Consider the following 319-residue polypeptide: MTTQASTGLRHQTVLRDEAIDALLWRDDGIYIDGTFGRGGHSRLILERLGPGGRLIAFDKDPAAITEAGTVEDARFAIEHDSFAHLDAALDARGIGRVAGVLLDLGISSPQIDEGARGFSFRMDGPLDMRMDTTRGITAAQWLAEADERDIARVIRDYGEERFAVQIAKAIVARRRESGTRGPLDRTSELAALVAQAVKTREKGQDPATRTFQALRIHVNQELADLETGLKSAFERLEQGGRLVVISFHSLEDRIVKRFMQALARPEQSAAPEMRRAPLRAHELPAPQLRLLGRVRPSEAEVSANPRSRSAIMRVAERC.

Residues 39-41 (GGH), D59, F83, D104, and Q111 contribute to the S-adenosyl-L-methionine site.

This sequence belongs to the methyltransferase superfamily. RsmH family.

It localises to the cytoplasm. It carries out the reaction cytidine(1402) in 16S rRNA + S-adenosyl-L-methionine = N(4)-methylcytidine(1402) in 16S rRNA + S-adenosyl-L-homocysteine + H(+). Specifically methylates the N4 position of cytidine in position 1402 (C1402) of 16S rRNA. In Ralstonia nicotianae (strain ATCC BAA-1114 / GMI1000) (Ralstonia solanacearum), this protein is Ribosomal RNA small subunit methyltransferase H.